An 86-amino-acid polypeptide reads, in one-letter code: Small ribosomal subunit protein bS20 (86 aa).

The segment covering 1–11 (MANIKSQIKRN) has biased composition (polar residues). Residues 1–20 (MANIKSQIKRNLTNEKRHQA) form a disordered region.

Belongs to the bacterial ribosomal protein bS20 family.

Functionally, binds directly to 16S ribosomal RNA. The polypeptide is Small ribosomal subunit protein bS20 (Acholeplasma laidlawii (strain PG-8A)).